The sequence spans 391 residues: ATP phosphoribosyltransferase regulatory subunit (391 aa).

It belongs to the class-II aminoacyl-tRNA synthetase family. HisZ subfamily. Heteromultimer composed of HisG and HisZ subunits.

The protein resides in the cytoplasm. It participates in amino-acid biosynthesis; L-histidine biosynthesis; L-histidine from 5-phospho-alpha-D-ribose 1-diphosphate: step 1/9. Functionally, required for the first step of histidine biosynthesis. May allow the feedback regulation of ATP phosphoribosyltransferase activity by histidine. In Bacillus pumilus (strain SAFR-032), this protein is ATP phosphoribosyltransferase regulatory subunit.